The following is a 332-amino-acid chain: Holliday junction branch migration complex subunit RuvB (332 aa).

The interval 1 to 181 is large ATPase domain (RuvB-L); the sequence is MSRILDNEQM…FGITGHMEYY (181 aa). Residues Leu-20, Arg-21, Gly-62, Lys-65, Thr-66, Thr-67, 128–130, Arg-171, Tyr-181, and Arg-218 contribute to the ATP site; that span reads EDF. Thr-66 contacts Mg(2+). Residues 182–252 are small ATPAse domain (RuvB-S); the sequence is EEADLTEIVE…ITDQALSMLD (71 aa). Residues 255–332 are head domain (RuvB-H); that stretch reads HEGLDYVDQK…EHLGYEYMEK (78 aa). 4 residues coordinate DNA: Arg-291, Arg-310, Arg-312, and Arg-315.

It belongs to the RuvB family. In terms of assembly, homohexamer. Forms an RuvA(8)-RuvB(12)-Holliday junction (HJ) complex. HJ DNA is sandwiched between 2 RuvA tetramers; dsDNA enters through RuvA and exits via RuvB. An RuvB hexamer assembles on each DNA strand where it exits the tetramer. Each RuvB hexamer is contacted by two RuvA subunits (via domain III) on 2 adjacent RuvB subunits; this complex drives branch migration. In the full resolvosome a probable DNA-RuvA(4)-RuvB(12)-RuvC(2) complex forms which resolves the HJ.

It localises to the cytoplasm. It catalyses the reaction ATP + H2O = ADP + phosphate + H(+). Its function is as follows. The RuvA-RuvB-RuvC complex processes Holliday junction (HJ) DNA during genetic recombination and DNA repair, while the RuvA-RuvB complex plays an important role in the rescue of blocked DNA replication forks via replication fork reversal (RFR). RuvA specifically binds to HJ cruciform DNA, conferring on it an open structure. The RuvB hexamer acts as an ATP-dependent pump, pulling dsDNA into and through the RuvAB complex. RuvB forms 2 homohexamers on either side of HJ DNA bound by 1 or 2 RuvA tetramers; 4 subunits per hexamer contact DNA at a time. Coordinated motions by a converter formed by DNA-disengaged RuvB subunits stimulates ATP hydrolysis and nucleotide exchange. Immobilization of the converter enables RuvB to convert the ATP-contained energy into a lever motion, pulling 2 nucleotides of DNA out of the RuvA tetramer per ATP hydrolyzed, thus driving DNA branch migration. The RuvB motors rotate together with the DNA substrate, which together with the progressing nucleotide cycle form the mechanistic basis for DNA recombination by continuous HJ branch migration. Branch migration allows RuvC to scan DNA until it finds its consensus sequence, where it cleaves and resolves cruciform DNA. This Streptococcus gordonii (strain Challis / ATCC 35105 / BCRC 15272 / CH1 / DL1 / V288) protein is Holliday junction branch migration complex subunit RuvB.